A 217-amino-acid chain; its full sequence is RING-H2 finger protein ATL70 (217 aa).

Residues 61-81 (IGGFRYGIGVSIGVLLLITTI) traverse the membrane as a helical segment. The segment at 147 to 189 (CAICLGDYKGKHLLRQLPDCNHLFHLKCIDTWLRLNPTCPVCR) adopts an RING-type; atypical zinc-finger fold.

It belongs to the RING-type zinc finger family. ATL subfamily.

Its subcellular location is the membrane. The catalysed reaction is S-ubiquitinyl-[E2 ubiquitin-conjugating enzyme]-L-cysteine + [acceptor protein]-L-lysine = [E2 ubiquitin-conjugating enzyme]-L-cysteine + N(6)-ubiquitinyl-[acceptor protein]-L-lysine.. Its pathway is protein modification; protein ubiquitination. The sequence is that of RING-H2 finger protein ATL70 (ATL70) from Arabidopsis thaliana (Mouse-ear cress).